Here is a 232-residue protein sequence, read N- to C-terminus: Ubiquinone biosynthesis O-methyltransferase (232 aa).

Arg-36, Gly-55, Asp-76, and Leu-120 together coordinate S-adenosyl-L-methionine.

This sequence belongs to the methyltransferase superfamily. UbiG/COQ3 family.

The catalysed reaction is a 3-demethylubiquinol + S-adenosyl-L-methionine = a ubiquinol + S-adenosyl-L-homocysteine + H(+). It carries out the reaction a 3-(all-trans-polyprenyl)benzene-1,2-diol + S-adenosyl-L-methionine = a 2-methoxy-6-(all-trans-polyprenyl)phenol + S-adenosyl-L-homocysteine + H(+). It functions in the pathway cofactor biosynthesis; ubiquinone biosynthesis. Functionally, O-methyltransferase that catalyzes the 2 O-methylation steps in the ubiquinone biosynthetic pathway. This is Ubiquinone biosynthesis O-methyltransferase from Pseudomonas putida (strain GB-1).